The following is a 180-amino-acid chain: Putative adenylate kinase (180 aa).

Residues Gly-10, Gly-12, Lys-13, Thr-14, and Thr-15 each contribute to the ATP site. The tract at residues 30-50 (NLRDFALEKGCGREVDGEVEV) is NMP. An LID region spans residues 99-109 (ERGYSKEKIGE). The ATP site is built by Arg-100 and Lys-138.

This sequence belongs to the adenylate kinase family. AK6 subfamily. In terms of assembly, interacts with uS11. Not a structural component of 40S pre-ribosomes, but transiently interacts with them by binding to uS11.

It carries out the reaction AMP + ATP = 2 ADP. It catalyses the reaction ATP + H2O = ADP + phosphate + H(+). In terms of biological role, broad-specificity nucleoside monophosphate (NMP) kinase that catalyzes the reversible transfer of the terminal phosphate group between nucleoside triphosphates and monophosphates. Also has ATPase activity. Involved in the late maturation steps of the 30S ribosomal particles, specifically 16S rRNA maturation. While NMP activity is not required for ribosome maturation, ATPase activity is. Associates transiently with small ribosomal subunit protein uS11. ATP hydrolysis breaks the interaction with uS11. May temporarily remove uS11 from the ribosome to enable a conformational change of the ribosomal RNA that is needed for the final maturation step of the small ribosomal subunit. In Pyrococcus abyssi (strain GE5 / Orsay), this protein is Putative adenylate kinase.